The chain runs to 376 residues: Cysteine synthase 1 (376 aa).

A mitochondrion-targeting transit peptide spans 1-16; that stretch reads MFRHGVRTFATTSLRR. Lys-79 carries the post-translational modification N6-(pyridoxal phosphate)lysine. Residues Asn-109, 215 to 219, and Ser-314 each bind pyridoxal 5'-phosphate; that span reads GTGGT.

The protein belongs to the cysteine synthase/cystathionine beta-synthase family. Requires pyridoxal 5'-phosphate as cofactor.

The protein resides in the mitochondrion. It catalyses the reaction O-succinyl-L-serine + hydrogen sulfide = L-cysteine + succinate. It carries out the reaction O-acetyl-L-serine + hydrogen sulfide = L-cysteine + acetate. It functions in the pathway amino-acid biosynthesis; L-cysteine biosynthesis; L-cysteine from L-serine: step 2/2. Catalyzes the conversion of O-succinyl-L-serine into cysteine, the last step in the cysteine biosynthesis pathway. Can also use O-acetyl-L-serine. This chain is Cysteine synthase 1 (cys-17), found in Neurospora crassa (strain ATCC 24698 / 74-OR23-1A / CBS 708.71 / DSM 1257 / FGSC 987).